Reading from the N-terminus, the 388-residue chain is Staphopain A (388 aa).

The first 25 residues, 1–25 (MKRNFPKLIALSLIFSLSVTPIANA), serve as a signal peptide directing secretion. Residues 26–214 (ESNSNIKAKD…TSQFKSNNYT (189 aa)) constitute a propeptide that is removed on maturation. Catalysis depends on residues C238, H334, and N355.

Belongs to the peptidase C47 family. As to quaternary structure, in the cytoplasm, prematurely activated/folded ScpA forms a stable non-covalent complex with ScpB. In terms of processing, cleavage leads to the activation of ScpA probably by an auto-catalytic manner.

It localises to the secreted. The catalysed reaction is Broad endopeptidase action on proteins including elastin, but rather limited hydrolysis of small-molecule substrates. Assays are conveniently made with hemoglobin, casein or Z-Phe-Arg-NHMec as substrate.. Prematurely activated/folded staphopain A is inhibited by staphostatin A (ScpB), which is probably required to protect staphylococcal cytoplasmic proteins from degradation by ScpA. In terms of biological role, cysteine protease that plays an important role in the inhibition of host innate immune response. Cleaves host elastins found in connective tissues, pulmonary surfactant protein A in the lungs, and the chemokine receptor CXCR2 on leukocytes. Proteolytic cleavage of surfactant protein A impairs bacterial phagocytosis by neutrophils while CXCR2 degradation blocks neutrophil activation and chemotaxis. Additionally, promotes vascular leakage by activating the plasma kallikerin/kinin system, resulting in hypotension. The polypeptide is Staphopain A (sspP) (Staphylococcus aureus (strain COL)).